A 421-amino-acid polypeptide reads, in one-letter code: Accessory Sec system protein translocase subunit SecY2 (421 aa).

Transmembrane regions (helical) follow at residues 17–37 (LWTS…IPGV), 69–89 (FALG…LTLI), 102–122 (TFLF…IAII), 139–159 (FGAM…LVWL), 165–185 (ILGI…NWPT), 204–224 (VILM…TVVV), 254–274 (PAGG…QYIL), 299–319 (PLGV…FAFI), 358–378 (SFVG…FGII), and 383–403 (TQYA…INII).

The protein belongs to the SecY/SEC61-alpha family. SecY2 subfamily. In terms of assembly, component of the accessory SecA2/SecY2 protein translocase complex required to export cell wall proteins. May form heterotrimers with SecE and SecG subunits.

It is found in the cell membrane. Part of the accessory SecA2/SecY2 system specifically required for export of possible cell wall proteins. The central subunit of a protein translocation channel. The polypeptide is Accessory Sec system protein translocase subunit SecY2 (Leuconostoc gelidum subsp. gasicomitatum (strain DSM 15947 / CCUG 46042 / CECT 5767 / JCM 12535 / LMG 18811 / NBRC 113245 / TB1-10) (Leuconostoc gasicomitatum)).